Here is a 170-residue protein sequence, read N- to C-terminus: Small ribosomal subunit protein uS13m (170 aa).

Residues Leu130–Lys170 are disordered. 2 stretches are compositionally biased toward basic residues: residues Lys132–Lys147 and Lys155–Lys170.

This sequence belongs to the universal ribosomal protein uS13 family. Part of the small ribosomal subunit.

It localises to the mitochondrion. In terms of biological role, located at the top of the head of the small subunit, it contacts several helices of the small subunit rRNA. The sequence is that of Small ribosomal subunit protein uS13m (mrps13) from Dictyostelium citrinum (Slime mold).